We begin with the raw amino-acid sequence, 330 residues long: Biotin synthase (330 aa).

The Radical SAM core domain occupies phenylalanine 43–arginine 272. 3 residues coordinate [4Fe-4S] cluster: cysteine 61, cysteine 65, and cysteine 68. Serine 105, cysteine 137, cysteine 197, and arginine 267 together coordinate [2Fe-2S] cluster.

It belongs to the radical SAM superfamily. Biotin synthase family. As to quaternary structure, homodimer. [4Fe-4S] cluster is required as a cofactor. It depends on [2Fe-2S] cluster as a cofactor.

The catalysed reaction is (4R,5S)-dethiobiotin + (sulfur carrier)-SH + 2 reduced [2Fe-2S]-[ferredoxin] + 2 S-adenosyl-L-methionine = (sulfur carrier)-H + biotin + 2 5'-deoxyadenosine + 2 L-methionine + 2 oxidized [2Fe-2S]-[ferredoxin]. It participates in cofactor biosynthesis; biotin biosynthesis; biotin from 7,8-diaminononanoate: step 2/2. In terms of biological role, catalyzes the conversion of dethiobiotin (DTB) to biotin by the insertion of a sulfur atom into dethiobiotin via a radical-based mechanism. The polypeptide is Biotin synthase (Porphyromonas gingivalis (strain ATCC 33277 / DSM 20709 / CIP 103683 / JCM 12257 / NCTC 11834 / 2561)).